The primary structure comprises 274 residues: TIP41-like protein (274 aa).

The protein belongs to the TIP41 family.

This is TIP41-like protein (tiprl) from Dictyostelium discoideum (Social amoeba).